The primary structure comprises 539 residues: Chaperonin GroEL 2 (539 aa).

ATP contacts are provided by residues 29-32, 86-90, Gly414, 479-481, and Asp495; these read TIGP, DGTTT, and DAL.

It belongs to the chaperonin (HSP60) family. Forms a cylinder of 14 subunits composed of two heptameric rings stacked back-to-back. Interacts with the co-chaperonin GroES.

It is found in the cytoplasm. It catalyses the reaction ATP + H2O + a folded polypeptide = ADP + phosphate + an unfolded polypeptide.. Together with its co-chaperonin GroES, plays an essential role in assisting protein folding. The GroEL-GroES system forms a nano-cage that allows encapsulation of the non-native substrate proteins and provides a physical environment optimized to promote and accelerate protein folding. This Synechococcus sp. (strain JA-2-3B'a(2-13)) (Cyanobacteria bacterium Yellowstone B-Prime) protein is Chaperonin GroEL 2.